We begin with the raw amino-acid sequence, 111 residues long: Nucleoid-associated protein CYA_1369 (111 aa).

The protein belongs to the YbaB/EbfC family. Homodimer.

Its subcellular location is the cytoplasm. The protein resides in the nucleoid. Functionally, binds to DNA and alters its conformation. May be involved in regulation of gene expression, nucleoid organization and DNA protection. The chain is Nucleoid-associated protein CYA_1369 from Synechococcus sp. (strain JA-3-3Ab) (Cyanobacteria bacterium Yellowstone A-Prime).